We begin with the raw amino-acid sequence, 126 residues long: Type II methyltransferase M.HgiGI (126 aa).

Residues Met-1 to Ala-126 enclose the SAM-dependent MTase C5-type domain. Residue Cys-75 is part of the active site.

It belongs to the class I-like SAM-binding methyltransferase superfamily. C5-methyltransferase family.

The catalysed reaction is a 2'-deoxycytidine in DNA + S-adenosyl-L-methionine = a 5-methyl-2'-deoxycytidine in DNA + S-adenosyl-L-homocysteine + H(+). Functionally, a methylase, recognizes the double-stranded sequence 5'-GRCGYC-3', methylates C-? on both strands, and protects the DNA from cleavage by the HgiEI endonuclease. In Herpetosiphon aurantiacus (Herpetosiphon giganteus), this protein is Type II methyltransferase M.HgiGI.